The following is a 453-amino-acid chain: Trypanin (453 aa).

Residues 1 to 10 (MPPRTAAERG) are compositionally biased toward basic and acidic residues. The segment at 1 to 22 (MPPRTAAERGGRRKSVKAPPPV) is disordered. Coiled-coil stretches lie at residues 60-156 (TITK…EMNV) and 185-377 (SCEA…LVEE).

This sequence belongs to the DRC4 family.

It is found in the cytoplasm. It localises to the cytoskeleton. The protein resides in the cell projection. The protein localises to the cilium. Its subcellular location is the flagellum. Its function is as follows. Cytoskeletal linker that plays a central role in the flagellum cell motility. Required for directional cell motility. Plays a role as part of a dynein regulatory system that regulates flagellar beat in response to signals from the central pair apparatus and radial spokes in procyclic cells. Also plays an essential role in the bloodstream form of the trypanosomes as its silencing is lethal for the circulating form. The polypeptide is Trypanin (Trypanosoma brucei rhodesiense).